The sequence spans 208 residues: Redox-sensing transcriptional repressor Rex 1 (208 aa).

The H-T-H motif DNA-binding region spans 15–54 (SYYMCLERLLDEGVEVVSSEELARRLDLKASQIRKDLSYF). 89–94 (GAGNIG) provides a ligand contact to NAD(+).

It belongs to the transcriptional regulatory Rex family. In terms of assembly, homodimer.

The protein resides in the cytoplasm. Modulates transcription in response to changes in cellular NADH/NAD(+) redox state. This Thermotoga maritima (strain ATCC 43589 / DSM 3109 / JCM 10099 / NBRC 100826 / MSB8) protein is Redox-sensing transcriptional repressor Rex 1.